We begin with the raw amino-acid sequence, 135 residues long: Large ribosomal subunit protein uL22c (135 aa).

This sequence belongs to the universal ribosomal protein uL22 family. In terms of assembly, part of the 50S ribosomal subunit.

It is found in the plastid. In terms of biological role, this protein binds specifically to 23S rRNA. Functionally, the globular domain of the protein is located near the polypeptide exit tunnel on the outside of the subunit, while an extended beta-hairpin is found that lines the wall of the exit tunnel in the center of the 70S ribosome. This chain is Large ribosomal subunit protein uL22c (rpl22), found in Cuscuta exaltata (Tall dodder).